Here is a 370-residue protein sequence, read N- to C-terminus: Holliday junction branch migration complex subunit RuvB (370 aa).

A disordered region spans residues M1–I53. A large ATPase domain (RuvB-L) region spans residues P13–Y214. Residues P43–I53 show a composition bias toward basic and acidic residues. ATP contacts are provided by residues I53, R54, G95, K98, T99, T100, E161–F163, R204, Y214, and R251. A Mg(2+)-binding site is contributed by T99. The segment at E215–N285 is small ATPAse domain (RuvB-S). The interval P288 to L370 is head domain (RuvB-H). DNA contacts are provided by R343 and R348.

The protein belongs to the RuvB family. Homohexamer. Forms an RuvA(8)-RuvB(12)-Holliday junction (HJ) complex. HJ DNA is sandwiched between 2 RuvA tetramers; dsDNA enters through RuvA and exits via RuvB. An RuvB hexamer assembles on each DNA strand where it exits the tetramer. Each RuvB hexamer is contacted by two RuvA subunits (via domain III) on 2 adjacent RuvB subunits; this complex drives branch migration. In the full resolvosome a probable DNA-RuvA(4)-RuvB(12)-RuvC(2) complex forms which resolves the HJ.

It is found in the cytoplasm. The enzyme catalyses ATP + H2O = ADP + phosphate + H(+). Its function is as follows. The RuvA-RuvB-RuvC complex processes Holliday junction (HJ) DNA during genetic recombination and DNA repair, while the RuvA-RuvB complex plays an important role in the rescue of blocked DNA replication forks via replication fork reversal (RFR). RuvA specifically binds to HJ cruciform DNA, conferring on it an open structure. The RuvB hexamer acts as an ATP-dependent pump, pulling dsDNA into and through the RuvAB complex. RuvB forms 2 homohexamers on either side of HJ DNA bound by 1 or 2 RuvA tetramers; 4 subunits per hexamer contact DNA at a time. Coordinated motions by a converter formed by DNA-disengaged RuvB subunits stimulates ATP hydrolysis and nucleotide exchange. Immobilization of the converter enables RuvB to convert the ATP-contained energy into a lever motion, pulling 2 nucleotides of DNA out of the RuvA tetramer per ATP hydrolyzed, thus driving DNA branch migration. The RuvB motors rotate together with the DNA substrate, which together with the progressing nucleotide cycle form the mechanistic basis for DNA recombination by continuous HJ branch migration. Branch migration allows RuvC to scan DNA until it finds its consensus sequence, where it cleaves and resolves cruciform DNA. The sequence is that of Holliday junction branch migration complex subunit RuvB from Cyanothece sp. (strain PCC 7425 / ATCC 29141).